Reading from the N-terminus, the 186-residue chain is Intraflagellar transport protein 27 homolog (186 aa).

Residues 12 to 19 (GDPAVGKT), 64 to 68 (DSAGK), and 123 to 126 (TKTD) each bind GTP.

Belongs to the small GTPase superfamily. Rab family. Component of the IFT complex B, at least composed of IFT20, IFT22, IFT25, IFT27, IFT46, IFT52, TRAF3IP1/IFT54, IFT57, IFT74, IFT80, IFT81, and IFT88. Interacts with IFT25. Interacts with IFT70B. Interacts with RABL2/RABL2A; binding is equal in the presence of GTP or GDP. Interacts with IFT88. Interacts with ARL6; recognizes and binds with the GTP-free form of ARL6. Expressed predominantly in the testis (at protein level). Co-localizes with RABL2/RABL2A in the midpiece of elongated spermatids within the testis (at protein level).

It is found in the cell projection. It localises to the cilium. The protein resides in the cytoplasm. Its subcellular location is the flagellum. Small GTPase-like component of the intraflagellar transport (IFT) complex B that promotes the exit of the BBSome complex from cilia via its interaction with ARL6. Not involved in entry of the BBSome complex into cilium. Prevents aggregation of GTP-free ARL6. Required for hedgehog signaling. Forms a subcomplex within the IFT complex B with IFT25. Its role in intraflagellar transport is mainly seen in tissues rich in ciliated cells such as kidney and testis. Essential for male fertility, spermiogenesis and sperm flagella formation. Plays a role in the early development of the kidney. May be involved in the regulation of ureteric bud initiation. The protein is Intraflagellar transport protein 27 homolog (Ift27) of Mus musculus (Mouse).